We begin with the raw amino-acid sequence, 451 residues long: UDP-glycosyltransferase 76C4 (451 aa).

UDP-alpha-D-glucose-binding positions include S273, 332 to 334, 349 to 357, and 371 to 374; these read APQ, HNGWNSTVE, and RWDQ.

It belongs to the UDP-glycosyltransferase family.

This chain is UDP-glycosyltransferase 76C4 (UGT76C4), found in Arabidopsis thaliana (Mouse-ear cress).